The primary structure comprises 24 residues: Frenatin-4 (24 aa).

Expressed by the skin glands.

It is found in the secreted. In terms of biological role, very weak antimicrobial peptide since it does not show activity below 100 ug/ml against Bacillus cereus, Escherichia coli, Leuconostoc mesenteroides, Micrococcus luteus, Pastewella haemolytica, Staphylococcus aureus, Streptococcus faecalis and Streptococcus uberis. The chain is Frenatin-4 from Nyctimystes infrafrenatus (White-lipped tree frog).